Reading from the N-terminus, the 533-residue chain is Probable intron-encoded endonuclease 3 (533 aa).

A run of 3 helical transmembrane segments spans residues 1–21 (MYLS…FFGR), 30–50 (LITC…FFEV), and 81–101 (LTVA…IYSI). A ndh-5 exon 1 encoded region spans residues 1–108 (MYLSIIILPL…YSISYMSHDP (108 aa)). The interval 109–533 (RGRVRGKRVY…SISLLLGRRR (425 aa)) is ndh-5 intron 1 encoded.

This sequence in the N-terminal section; belongs to the complex I subunit 5 family. In the C-terminal section; belongs to the LAGLIDADG endonuclease family.

It localises to the mitochondrion membrane. Mitochondrial DNA endonuclease involved in intron homing. The protein is Probable intron-encoded endonuclease 3 of Neurospora crassa (strain ATCC 24698 / 74-OR23-1A / CBS 708.71 / DSM 1257 / FGSC 987).